Here is a 118-residue protein sequence, read N- to C-terminus: Late expression factor 11 (118 aa).

It belongs to the baculoviridae LEF-11 family.

Involved in late/very late gene activation. The protein is Late expression factor 11 (LEF-11) of Adoxophyes honmai nucleopolyhedrovirus.